The chain runs to 163 residues: Retinoic acid receptor responder protein 2 (163 aa).

Residues 1-20 (MKYLLISLALWLGMVGIHGT) form the signal peptide. 3 cysteine pairs are disulfide-bonded: Cys-79-Cys-89, Cys-100-Cys-119, and Cys-103-Cys-135. Positions 158 to 163 (RALKHK) are excised as a propeptide.

Post-translationally, secreted in an inactive precursor form, prochemerin, which is proteolytically processed by a variety of extracellular proteases to generate forms with differing levels of bioactivity. For example, the removal of six amino acids results in chemerin-157, which exhibits the highest activity, while removal of seven amino acids results in chemerin-156 which has slightly less activity. Some proteases are able to cleave at more than one site and chemerin forms may be sequentially processed by different enzymes to modulate activity levels. The coordinated expression and activity of chemerin-modifying enzymes is essential for regulating its bioactivation, inactivation and, consequently, biological function. Cathepsin G cleaves seven C-terminal amino acids from prochemerin (chemerin-156), elastase is able to cleave six (chemerin-157), eight (chemerin-155) or eleven (chemerin-152), plasmin cleaves five amino acids (chemerin-158), and tryptase cleaves five (chemerin-158) or eight (chemerin-155). Multiple cleavages might be required to fully activate chemerin, with an initial tryptase cleavage resulting in chemerin with low activity (chemerin-158), and a second cleavage by carboxypeptidase N or B producing highly active chemerin (chemerin-157).

The protein resides in the secreted. Functionally, adipocyte-secreted protein (adipokine) that regulates adipogenesis, metabolism and inflammation through activation of the chemokine-like receptor 1 (CMKLR1). Also acts as a ligand for CMKLR2. Can also bind to C-C chemokine receptor-like 2 (CCRL2), but with a lower affinity than it does to CMKLR1 or CMKLR2. Positively regulates adipocyte differentiation, modulates the expression of adipocyte genes involved in lipid and glucose metabolism and might play a role in angiogenesis, a process essential for the expansion of white adipose tissue. Also acts as a pro-inflammatory adipokine, causing an increase in secretion of pro-inflammatory and prodiabetic adipokines, which further impair adipose tissue metabolic function and have negative systemic effects including impaired insulin sensitivity, altered glucose and lipid metabolism, and a decrease in vascular function in other tissues. Can have both pro- and anti-inflammatory properties depending on the modality of enzymatic cleavage by different classes of proteases. Acts as a chemotactic factor for leukocyte populations expressing CMKLR1, particularly immature plasmacytoid dendritic cells, but also immature myeloid DCs, macrophages and natural killer cells. Exerts an anti-inflammatory role by preventing TNF/TNFA-induced VCAM1 expression and monocytes adhesion in vascular endothelial cells. The effect is mediated via inhibiting activation of NF-kappa-B and CRK/p38 through stimulation of AKT1/NOS3 signaling and nitric oxide production. Its dual role in inflammation and metabolism might provide a link Exhibits an antimicrobial function in the skin. The protein is Retinoic acid receptor responder protein 2 (RARRES2) of Cricetulus griseus (Chinese hamster).